Consider the following 468-residue polypeptide: 3-isopropylmalate dehydratase large subunit (468 aa).

Residues cysteine 345, cysteine 405, and cysteine 408 each contribute to the [4Fe-4S] cluster site.

This sequence belongs to the aconitase/IPM isomerase family. LeuC type 1 subfamily. As to quaternary structure, heterodimer of LeuC and LeuD. It depends on [4Fe-4S] cluster as a cofactor.

The enzyme catalyses (2R,3S)-3-isopropylmalate = (2S)-2-isopropylmalate. Its pathway is amino-acid biosynthesis; L-leucine biosynthesis; L-leucine from 3-methyl-2-oxobutanoate: step 2/4. In terms of biological role, catalyzes the isomerization between 2-isopropylmalate and 3-isopropylmalate, via the formation of 2-isopropylmaleate. This chain is 3-isopropylmalate dehydratase large subunit, found in Oceanobacillus iheyensis (strain DSM 14371 / CIP 107618 / JCM 11309 / KCTC 3954 / HTE831).